Here is a 332-residue protein sequence, read N- to C-terminus: Polygalacturonase inhibitor 1 (332 aa).

The signal sequence occupies residues 1 to 24; sequence MASTASFMLAVLLAVAVAAAPARA. Disulfide bonds link C27-C58 and C59-C66. LRR repeat units follow at residues 72–96, 97–118, 119–142, 143–166, 167–192, 193–215, 216–236, 237–259, 260–283, and 284–310; these read VNNV…GLTA, LMSL…CLTA, LSNL…SLAR, IRSL…SFSD, LPNL…VQGQ, FRSL…AQDE, INTV…LFAA, GRPI…KLVF, PPEL…SLAA, and LSTL…VIRH. N-linked (GlcNAc...) asparagine glycosylation is present at N131. Cystine bridges form between C298–C312, C298–C320, and C320–C329.

The protein belongs to the polygalacturonase-inhibiting protein family. Highly expressed in calli, immature and mature panicles, and in three inner floral organs: lodicules, stamens and carpels. Expressed at low level in seedling roots and mature stems.

Its subcellular location is the secreted. It is found in the cell wall. Functionally, inhibitor of fungal polygalacturonase. Regulates floral organ number. In Oryza sativa subsp. japonica (Rice), this protein is Polygalacturonase inhibitor 1.